The following is a 561-amino-acid chain: MQSYSIPFHSISEGGKQFSQLFLDYTSNTLATDALISQFYQHDYRNPAHLSAQIQTVSGRTYQRPELVLELTRQNQLFGSGPKTFERIQSLLSKKTLAVVTGQQVGFLTGPVYTIYKTLSAIVLTEKWHEHYPDFEFVPVFWLESEDHDYEEISHVSLLKGNSLERFSYSEASYQALSSAGATQITPEFLDWLGKEILEAFPESDYKQKMLTLVRESYKEGVSYEMAFATLLARLFYDEGLIIVSSHPKGFKTLAKSVFIRELETFPASSQNIIAQSARLEESGYDAQAKPRPINLYFFQENQRLKIEPRRQGSVELLPGKTTFSQHEMLEFAHSAPELFSPNVVLRPIVQDTVLPTVAYVAGPGEISYFGQFLRNYQFFNIPMPIIYPRASLSLLEPKISRVFEKSARILNEKEISGSLSRFYQNSQQFINELLLAASTVDIEDEATTAIQGLSDIFKKFGLKLSEIDPTLAQSVEKVMQSTLNQVENLKSKTIKAEKQRHNDLIAQIEKSRDNLLPGGVLQERVLNGFHFFNKFDTTLIKLLKELLLTKAFDKHLIVPL.

Residues 472–517 (LAQSVEKVMQSTLNQVENLKSKTIKAEKQRHNDLIAQIEKSRDNLL) adopt a coiled-coil conformation.

This sequence belongs to the BshC family.

This is Putative cysteine ligase BshC from Chloroherpeton thalassium (strain ATCC 35110 / GB-78).